A 395-amino-acid chain; its full sequence is Tryptophan synthase beta chain (395 aa).

At Lys89 the chain carries N6-(pyridoxal phosphate)lysine.

The protein belongs to the TrpB family. In terms of assembly, tetramer of two alpha and two beta chains. Pyridoxal 5'-phosphate is required as a cofactor.

It carries out the reaction (1S,2R)-1-C-(indol-3-yl)glycerol 3-phosphate + L-serine = D-glyceraldehyde 3-phosphate + L-tryptophan + H2O. The protein operates within amino-acid biosynthesis; L-tryptophan biosynthesis; L-tryptophan from chorismate: step 5/5. Its function is as follows. The beta subunit is responsible for the synthesis of L-tryptophan from indole and L-serine. This chain is Tryptophan synthase beta chain, found in Fusobacterium nucleatum subsp. nucleatum (strain ATCC 25586 / DSM 15643 / BCRC 10681 / CIP 101130 / JCM 8532 / KCTC 2640 / LMG 13131 / VPI 4355).